Reading from the N-terminus, the 1072-residue chain is E3 ubiquitin-protein ligase RNF31 (1072 aa).

The interval 1–485 (MPGEEEERAF…PEKQRQDKMR (485 aa)) is polyubiquitin-binding. The PUB domain occupies 71–142 (TLSTALNILE…SFPEGQEEPD (72 aa)). Residues 263–290 (QGTHLSPSLPASAQPRPQSTSLLALGDS) are disordered. Polar residues predominate over residues 265-280 (THLSPSLPASAQPRPQ). The segment covering 281–290 (STSLLALGDS) has biased composition (low complexity). 2 consecutive RanBP2-type zinc fingers follow at residues 299–329 (SAHL…PRGC) and 350–379 (ARGR…PRLA). Serine 383 carries the phosphoserine modification. A RanBP2-type 3 zinc finger spans residues 409–438 (QSQVWYCIHCTFCNSSPGWVCVMCNRTSSP). The interval 443–484 (HAPRPYASSLEKGPPKPGPPRRLSAPLPSSCGDPEKQRQDKM) is disordered. A compositionally biased stretch (low complexity) spans 463–472 (RRLSAPLPSS). Phosphoserine is present on serine 466. Residues 475 to 484 (DPEKQRQDKM) show a composition bias toward basic and acidic residues. The segment at 563–616 (GNLDEAVEECVRTRRRKVQELQSLGFGPEEGSLQALFQHGGDVSRALTELQRQR) is interaction with RBCK1. The UBA domain occupies 564-615 (NLDEAVEECVRTRRRKVQELQSLGFGPEEGSLQALFQHGGDVSRALTELQRQ). Positions 695-929 (LAQECAVCGW…KSLHGHHPRD (235 aa)) are TRIAD supradomain. Positions 699, 702, 717, 719, 722, and 725 each coordinate Zn(2+). Residues 699 to 749 (CAVCGWALPHNRMQALTSCECTICPDCFRQHFTIALKEKHITDMVCPACGR) form an RING-type 1 zinc finger. Lysine 735 participates in a covalent cross-link: (Microbial infection) Glycyl lysine isopeptide (Lys-Gly) (interchain with G-Cter in ubiquitin). Positions 744 and 747 each coordinate Zn(2+). Residues 779 to 841 (ALFHKKLTEG…WEEQHRGRSC (63 aa)) form an IBR-type zinc finger. A (Microbial infection) Glycyl lysine isopeptide (Lys-Gly) (interchain with G-Cter in ubiquitin) cross-link involves residue lysine 783. Zn(2+) contacts are provided by cysteine 799, cysteine 802, cysteine 817, cysteine 820, cysteine 825, cysteine 828, histidine 836, cysteine 841, cysteine 871, and cysteine 874. An RING-type 2; atypical zinc finger spans residues 871 to 901 (CPKCKFSYALARGGCMHFHCTQCRHQFCSGC). Lysine 875 participates in a covalent cross-link: (Microbial infection) Glycyl lysine isopeptide (Lys-Gly) (interchain with G-Cter in ubiquitin). Cysteine 885 is a catalytic residue. Residues cysteine 890, cysteine 893, cysteine 898, cysteine 901, cysteine 916, and histidine 925 each contribute to the Zn(2+) site. An LDD domain region spans residues 910-1072 (KCPEPNCRVK…LGQSIPRRRK (163 aa)).

This sequence belongs to the RBR family. As to quaternary structure, component of the LUBAC complex (linear ubiquitin chain assembly complex) which consists of SHARPIN, RBCK1 and RNF31. LUBAC has a MW of approximately 600 kDa suggesting a heteromultimeric assembly of its subunits. Associates with the TNF-R1 signaling complex (TNF-RSC) in a stimulation-dependent manner. Interacts (via the PUB domain) with OTULIN (via the PIM motif); the interaction is direct. Interacts (via the PUB domain) with VCP (via the PIM motif). Interacts (via the PUB domain) with SPATA2 (via the PIM motif); interaction is direct and bridges RNF31 and CYLD. Interacts with CYLD; the interaction is indirect and is mediated via SPATA2. Interacts with MUSK. Interacts with CARD11, promoting linear ubiquitination of BCL10. In terms of assembly, (Microbial infection) Interacts with S.flexneri E3 ubiquitin-protein ligases IpaH1.4 and IpaH2.5, leading to its ubiquitination. In terms of processing, autoubiquitinated. Interaction with OTULIN is required to suppress formation of 'Met-1'-linked polyubiquitin chains and prevent subsequent inactivation of the LUBAC complex. Post-translationally, cleaved by caspase during apoptosis. (Microbial infection) Ubiquitinated by S.flexneri E3 ubiquitin-protein ligases IpaH1.4 and IpaH2.5, leading to its degradation by the proteasome, thereby preventing formation of the bacterial ubiquitin coat and activation of innate immunity. In terms of tissue distribution, expressed in both normal and transformed breast epithelial cell lines.

It localises to the cytoplasm. The enzyme catalyses [E2 ubiquitin-conjugating enzyme]-S-ubiquitinyl-L-cysteine + [acceptor protein]-L-lysine = [E2 ubiquitin-conjugating enzyme]-L-cysteine + [acceptor protein]-N(6)-ubiquitinyl-L-lysine.. Its pathway is protein modification; protein ubiquitination. E3 ubiquitin-protein ligase component of the LUBAC complex which conjugates linear ('Met-1'-linked) polyubiquitin chains to substrates and plays a key role in NF-kappa-B activation and regulation of inflammation. LUBAC conjugates linear polyubiquitin to IKBKG and RIPK1 and is involved in activation of the canonical NF-kappa-B and the JNK signaling pathways. Linear ubiquitination mediated by the LUBAC complex interferes with TNF-induced cell death and thereby prevents inflammation. LUBAC is recruited to the TNF-R1 signaling complex (TNF-RSC) following polyubiquitination of TNF-RSC components by BIRC2 and/or BIRC3 and to conjugate linear polyubiquitin to IKBKG and possibly other components contributing to the stability of the complex. The LUBAC complex is also involved in innate immunity by conjugating linear polyubiquitin chains at the surface of bacteria invading the cytosol to form the ubiquitin coat surrounding bacteria. LUBAC is not able to initiate formation of the bacterial ubiquitin coat, and can only promote formation of linear polyubiquitins on pre-existing ubiquitin. Recruited to the surface of bacteria by RNF213, which initiates the bacterial ubiquitin coat. The bacterial ubiquitin coat acts as an 'eat-me' signal for xenophagy and promotes NF-kappa-B activation. Together with OTULIN, the LUBAC complex regulates the canonical Wnt signaling during angiogenesis. RNF31 is required for linear ubiquitination of BCL10, thereby promoting TCR-induced NF-kappa-B activation. Binds polyubiquitin of different linkage types. This chain is E3 ubiquitin-protein ligase RNF31, found in Homo sapiens (Human).